The primary structure comprises 128 residues: Orchestin (128 aa).

A signal peptide spans 1–20 (MNKVFIIGVCLFIVSQAVLA). The disordered stretch occupies residues 23-95 (WDSDESSDER…DEDSDDSQES (73 aa)). Composition is skewed to basic and acidic residues over residues 30–49 (DERL…KLVV) and 56–81 (EDSN…RKLS). The span at 84–93 (TSDEDSDDSQ) shows a compositional bias: acidic residues.

Post-translationally, phosphorylated on Ser and Tyr residues. Calcium-binding activity is dependent on serine phosphorylation but not on tyrosine phosphorylation. As to expression, posterior caeca epithelium of the gut.

The protein localises to the secreted. Plays a role in cuticle calcification. May induce precipitation of the calcium stored in the posterior caeca as calcium carbonate. In Cryptorchestia cavimana (Amphipod), this protein is Orchestin.